The sequence spans 904 residues: DNA replication licensing factor MCM2 (904 aa).

Over residues 1–15 (MAESSESFTMASSPA) the composition is skewed to polar residues. Residues 1–80 (MAESSESFTM…ELIGDGMERD (80 aa)) are disordered. An N-acetylalanine modification is found at Ala2. An interaction with KAT7 region spans residues 2-257 (AESSESFTMA…LPEAPAELLQ (256 aa)). Phosphoserine is present on residues Ser12 and Ser13. A Phosphothreonine modification is found at Thr25. Phosphoserine is present on residues Ser26, Ser27, and Ser32. Thr39 is subject to Phosphothreonine. Residue Ser40 is modified to Phosphoserine; by CDC7. Ser41 is modified (phosphoserine). Phosphoserine; by CDC7 is present on Ser53. Thr59 bears the Phosphothreonine mark. Positions 61 to 130 (GPLEEEEDGE…DREAGRGLGR (70 aa)) are interaction with DNJC9. A compositionally biased stretch (acidic residues) spans 62 to 73 (PLEEEEDGEELI). A Phosphoserine; by ATR modification is found at Ser108. Residues 109–167 (QREAAERAMRQRDREAGRGLGRMRRGLLYDSDEEDEERPARKRRQVERATEDGEEDEEM) form a disordered region. Positions 111-125 (EAAERAMRQRDREAG) are enriched in basic and acidic residues. A Phosphotyrosine modification is found at Tyr137. A Phosphoserine modification is found at Ser139. A Glycyl lysine isopeptide (Lys-Gly) (interchain with G-Cter in SUMO2) cross-link involves residue Lys178. Lys216 carries the N6-acetyllysine modification. The C4-type zinc finger occupies 329–355 (CNKCNFVLGPFCQSQNQEVKPGSCPEC). Ser381 and Ser484 each carry phosphoserine. The 207-residue stretch at 473–679 (IGEKIFASIA…VQDEMLARFV (207 aa)) folds into the MCM domain. 2 residues coordinate ADP: Ser530 and Gln531. An Arginine finger motif is present at residues 655-658 (SRFD). Positions 686–705 (HHPSNKEEEGLANGSAAEPA) are disordered.

This sequence belongs to the MCM family. Component of the MCM2-7 complex. The complex forms a toroidal hexameric ring with the proposed subunit order MCM2-MCM6-MCM4-MCM7-MCM3-MCM5. Component of the CMG helicase complex, a hexameric ring of related MCM2-7 subunits stabilized by CDC45 and the tetrameric GINS complex. Interacts with DBF4. Interacts with KAT7. May interact with MCM10. Component of the replisome complex composed of at least DONSON, MCM2, MCM7, PCNA and TICRR. Forms a co-chaperone complex with DNAJC9 and histone H3.3-H4 heterodimers. Within the complex, interacts (via N-terminus) with DNAJC9 (via C-terminus); the interaction is histone-dependent. Interacts with histones H3.1 and H3.3. Interacts with AGER/RAGE; the interaction is increased following DNA replication stress and stabilizes the MCM2-7 complex at replication forks. In terms of processing, phosphorylated on Ser-108 by ATR in proliferating cells. Ser-108 proliferation is increased by genotoxic agents. Ser-40 is mediated by the CDC7-DBF4 and CDC7-DBF4B complexes, while Ser-53 phosphorylation is only mediated by the CDC7-DBF4 complex. Phosphorylation by the CDC7-DBF4 complex during G1/S phase is required for the initiation of DNA replication.

The protein resides in the nucleus. Its subcellular location is the chromosome. The catalysed reaction is ATP + H2O = ADP + phosphate + H(+). Functionally, acts as a component of the MCM2-7 complex (MCM complex) which is the replicative helicase essential for 'once per cell cycle' DNA replication initiation and elongation in eukaryotic cells. Core component of CDC45-MCM-GINS (CMG) helicase, the molecular machine that unwinds template DNA during replication, and around which the replisome is built. The active ATPase sites in the MCM2-7 ring are formed through the interaction surfaces of two neighboring subunits such that a critical structure of a conserved arginine finger motif is provided in trans relative to the ATP-binding site of the Walker A box of the adjacent subunit. The six ATPase active sites, however, are likely to contribute differentially to the complex helicase activity. Required for the entry in S phase and for cell division. Plays a role in terminally differentiated hair cells development of the cochlea and induces cells apoptosis. The protein is DNA replication licensing factor MCM2 of Homo sapiens (Human).